Consider the following 377-residue polypeptide: MDFDLTDEQRAIQDTFARFSDERIAPQAAALDEARAFPRALFRELAELGFFGMRYPESVGGSGLALSEFCLALSEVARGSMSLAGAVAMQSLMGTKFLQLLGNADIVERLFKPALRGDRIGAICMTEPNAGSDLESIATTATRVDGGYVINGQKTWITSAPVADFFTVFARAGDEKKLTIFLVEKDVPGITVGREIHKMGVWALPTSEVAFDGCFVPDSHRLSKEEGDGEGHLKKTLAEIRIITGAMALGVARAALFAAVRYAGERKQFGKPINRFQAIQLKLADMATGLEAATTLVHRAAWLCDMKRPHHKEAAMAKLFATETAAGICDDAARVLASYGYAMEYPVQRYLRDVRFTLIGGGTSEILKLVIAKEVSS.

Residues 123-132 (ICMTEPNAGS), 156-158 (WIT), Arg266, Gln277, and 363-365 (TSE) contribute to the FAD site.

Belongs to the acyl-CoA dehydrogenase family. Homotetramer. The cofactor is FAD.

The catalysed reaction is (2-aminobenzyl)malonyl-CoA + O2 + H(+) = (E)-2-aminocinnamoyl-CoA + H2O2 + CO2. The enzyme catalyses benzylmalonyl-CoA + O2 + H(+) = (E)-cinnamoyl-CoA + H2O2 + CO2. Functionally, involved in degradation of indoleacetate, the most common member of the auxin class of plant hormones. Catalyzes the irreversible oxidative decarboxylation of (2-aminobenzyl)malonyl-CoA to 2-aminocinnamoyl-CoA and CO(2). In vitro, shows high catalytic efficiency with benzylmalonyl-CoA, a chemical analog of the physiological substrate, but otherwise accepts only a few medium-chain alkylmalonyl-CoA compounds as alternative substrates with low activities. In Aromatoleum aromaticum (strain DSM 19018 / LMG 30748 / EbN1) (Azoarcus sp. (strain EbN1)), this protein is Benzylmalonyl-CoA dehydrogenase.